The sequence spans 350 residues: Biotin synthase (350 aa).

In terms of domain architecture, Radical SAM core spans 38–265; that stretch reads NHVQVSTLLS…MSAVRLSAGR (228 aa). Positions 53, 57, and 60 each coordinate [4Fe-4S] cluster. Positions 97, 128, 188, and 260 each coordinate [2Fe-2S] cluster.

Belongs to the radical SAM superfamily. Biotin synthase family. Homodimer. Requires [4Fe-4S] cluster as cofactor. [2Fe-2S] cluster is required as a cofactor.

It catalyses the reaction (4R,5S)-dethiobiotin + (sulfur carrier)-SH + 2 reduced [2Fe-2S]-[ferredoxin] + 2 S-adenosyl-L-methionine = (sulfur carrier)-H + biotin + 2 5'-deoxyadenosine + 2 L-methionine + 2 oxidized [2Fe-2S]-[ferredoxin]. It functions in the pathway cofactor biosynthesis; biotin biosynthesis; biotin from 7,8-diaminononanoate: step 2/2. Its function is as follows. Catalyzes the conversion of dethiobiotin (DTB) to biotin by the insertion of a sulfur atom into dethiobiotin via a radical-based mechanism. In Vibrio atlanticus (strain LGP32) (Vibrio splendidus (strain Mel32)), this protein is Biotin synthase.